A 1765-amino-acid chain; its full sequence is Sodium channel protein type 11 subunit alpha (1765 aa).

Residues methionine 1–serine 126 are Cytoplasmic-facing. Residues phenylalanine 115–arginine 403 form an I repeat. Residues valine 127–asparagine 148 form a helical membrane-spanning segment. The Extracellular segment spans residues serine 149–aspartate 157. The helical transmembrane segment at isoleucine 158–alanine 177 threads the bilayer. Over arginine 178–arginine 189 the chain is Cytoplasmic. Residues aspartate 190–proline 209 traverse the membrane as a helical segment. Over glycine 210–serine 216 the chain is Extracellular. An N-linked (GlcNAc...) asparagine glycan is attached at asparagine 214. The helical; Voltage-sensor transmembrane segment at alanine 217–leucine 236 threads the bilayer. The Cytoplasmic portion of the chain corresponds to lysine 237–aspartate 252. Residues valine 253–leucine 266 traverse the membrane as a helical segment. Residues valine 267–asparagine 339 lie on the Extracellular side of the membrane. Cysteines 280 and 317 form a disulfide. N-linked (GlcNAc...) asparagine glycans are attached at residues asparagine 319 and asparagine 333. The segment at residues phenylalanine 340–leucine 364 is an intramembrane region (pore-forming). Over arginine 365–phenylalanine 371 the chain is Extracellular. Residues valine 372–alanine 397 traverse the membrane as a helical segment. Over tyrosine 398–threonine 567 the chain is Cytoplasmic. An II repeat occupies cysteine 554–glutamine 820. Residues isoleucine 568–valine 591 form a helical membrane-spanning segment. At glutamate 592–threonine 602 the chain is on the extracellular side. Residues isoleucine 603 to leucine 626 form a helical membrane-spanning segment. At aspartate 627–histidine 634 the chain is on the cytoplasmic side. A helical transmembrane segment spans residues glycine 635 to leucine 656. The Extracellular portion of the chain corresponds to serine 657–serine 662. The N-linked (GlcNAc...) asparagine glycan is linked to asparagine 660. Residues phenylalanine 663 to leucine 682 traverse the membrane as a helical; Voltage-sensor segment. At asparagine 683–glycine 697 the chain is on the cytoplasmic side. The helical transmembrane segment at asparagine 698–threonine 720 threads the bilayer. Residues lysine 721–asparagine 741 lie on the Extracellular side of the membrane. A glycan (N-linked (GlcNAc...) asparagine) is linked at asparagine 723. Residues phenylalanine 742–tryptophan 762 constitute an intramembrane region (pore-forming). Over glycine 763 to proline 772 the chain is Extracellular. Residues cysteine 764 and cysteine 774 are joined by a disulfide bond. The chain crosses the membrane as a helical span at residues leucine 773–leucine 798. Residues asparagine 799–glutamine 1029 lie on the Cytoplasmic side of the membrane. An III repeat occupies asparagine 1022–leucine 1319. Residues isoleucine 1030 to isoleucine 1052 form a helical membrane-spanning segment. Over phenylalanine 1053 to lysine 1066 the chain is Extracellular. The chain crosses the membrane as a helical span at residues leucine 1067–phenylalanine 1092. Residues arginine 1093 to serine 1098 lie on the Cytoplasmic side of the membrane. Residues alanine 1099–methionine 1116 form a helical membrane-spanning segment. Asparagine 1117 is a topological domain (extracellular). The chain crosses the membrane as a helical; Voltage-sensor span at residues leucine 1118–phenylalanine 1139. Over glutamate 1140–asparagine 1158 the chain is Cytoplasmic. A helical transmembrane segment spans residues valine 1159–glycine 1180. Topologically, residues lysine 1181 to valine 1223 are extracellular. 4 N-linked (GlcNAc...) asparagine glycosylation sites follow: asparagine 1187, asparagine 1202, asparagine 1207, and asparagine 1210. The pore-forming intramembrane region spans glycine 1224–alanine 1245. The Extracellular portion of the chain corresponds to alanine 1246–asparagine 1261. Residues leucine 1262–isoleucine 1288 traverse the membrane as a helical segment. Residues aspartate 1289–aspartate 1341 are Cytoplasmic-facing. Residues isoleucine 1328–glutamine 1619 form an IV repeat. Residues leucine 1342–alanine 1365 traverse the membrane as a helical segment. Over glutamate 1366–lysine 1376 the chain is Extracellular. The helical transmembrane segment at threonine 1377 to leucine 1400 threads the bilayer. Residues arginine 1401 to threonine 1406 lie on the Cytoplasmic side of the membrane. Residues asparagine 1407 to glutamate 1430 traverse the membrane as a helical segment. The Extracellular segment spans residues aspartate 1431 to leucine 1440. Residues phenylalanine 1441–arginine 1463 form a helical; Voltage-sensor membrane-spanning segment. At threonine 1464–asparagine 1478 the chain is on the cytoplasmic side. Residues isoleucine 1479 to valine 1501 traverse the membrane as a helical segment. At lysine 1502–threonine 1515 the chain is on the extracellular side. An intramembrane region (pore-forming) is located at residues phenylalanine 1516–proline 1538. At methionine 1539–isoleucine 1559 the chain is on the extracellular side. Asparagine 1547 carries an N-linked (GlcNAc...) asparagine glycan. Residues alanine 1560–leucine 1584 traverse the membrane as a helical segment. Over glutamate 1585 to aspartate 1765 the chain is Cytoplasmic.

The protein belongs to the sodium channel (TC 1.A.1.10) family. Nav1.9/SCN11A subfamily. As to quaternary structure, the voltage-resistant sodium channel consists of an ion conducting pore forming alpha-subunit regulated by one or more auxiliary subunits SCN1B, SCN2B and SCN3B. In terms of tissue distribution, expressed (at protein level) in myenteric sensory neurons. Expressed in small sensory neurons of the dorsal root ganglia (C-fiber neurons) and trigeminal ganglia.

Its subcellular location is the cell membrane. The enzyme catalyses Na(+)(in) = Na(+)(out). With respect to regulation, activity is not sensitive to inhibition by tetrodotoxin. Functionally, sodium channel mediating the voltage-dependent sodium ion permeability of excitable membranes. Assuming opened or closed conformations in response to the voltage difference across the membrane, the protein forms a sodium-selective channel through which sodium ions may pass in accordance with their electrochemical gradient. Involved in membrane depolarization during action potential in nociceptors which function as key relay stations for the electrical transmission of pain signals from the periphery to the central nervous system. Also involved in rapid BDNF-evoked neuronal depolarization. This Rattus norvegicus (Rat) protein is Sodium channel protein type 11 subunit alpha.